A 467-amino-acid chain; its full sequence is tRNA-2-methylthio-N(6)-dimethylallyladenosine synthase (467 aa).

The tract at residues 1–20 is disordered; it reads MSDDTTQIEPAMAQETSPRA. One can recognise an MTTase N-terminal domain in the interval 23-143; that stretch reads RKVFVKTYGC…LPNALARVRG (121 aa). Residues cysteine 32, cysteine 68, cysteine 106, cysteine 184, cysteine 188, and cysteine 191 each contribute to the [4Fe-4S] cluster site. In terms of domain architecture, Radical SAM core spans 170-402; it reads RKRGVSAFLT…QALLSAQQYA (233 aa). The TRAM domain occupies 405–467; it reads DSMIGRKMDV…TNSLIAQKLA (63 aa).

The protein belongs to the methylthiotransferase family. MiaB subfamily. As to quaternary structure, monomer. [4Fe-4S] cluster is required as a cofactor.

Its subcellular location is the cytoplasm. It catalyses the reaction N(6)-dimethylallyladenosine(37) in tRNA + (sulfur carrier)-SH + AH2 + 2 S-adenosyl-L-methionine = 2-methylsulfanyl-N(6)-dimethylallyladenosine(37) in tRNA + (sulfur carrier)-H + 5'-deoxyadenosine + L-methionine + A + S-adenosyl-L-homocysteine + 2 H(+). Its function is as follows. Catalyzes the methylthiolation of N6-(dimethylallyl)adenosine (i(6)A), leading to the formation of 2-methylthio-N6-(dimethylallyl)adenosine (ms(2)i(6)A) at position 37 in tRNAs that read codons beginning with uridine. This Brucella melitensis biotype 1 (strain ATCC 23456 / CCUG 17765 / NCTC 10094 / 16M) protein is tRNA-2-methylthio-N(6)-dimethylallyladenosine synthase.